The sequence spans 676 residues: Periplasmic alpha-amylase (676 aa).

The first 17 residues, 1–17 (MKLAACFLTLLPGFAVA), serve as a signal peptide directing secretion. 2 disulfide bridges follow: Cys57-Cys75 and Cys121-Cys537. Residue Asn314 participates in Ca(2+) binding. Asp460 (nucleophile) is an active-site residue. Residue His464 coordinates Ca(2+). Glu503 acts as the Proton donor in catalysis.

It belongs to the glycosyl hydrolase 13 family. Monomer. Requires Ca(2+) as cofactor.

It is found in the periplasm. It carries out the reaction Endohydrolysis of (1-&gt;4)-alpha-D-glucosidic linkages in polysaccharides containing three or more (1-&gt;4)-alpha-linked D-glucose units.. In terms of biological role, since only maltooligosaccharides up to a chain length of 6 glucose units are actively transported through the cytoplasmic membrane via the membrane-bound complex of three proteins, MalF, MalG, and MalK, longer maltooligosaccharides must first be degraded by the periplasmic alpha-amylase, the MalS protein. In Escherichia coli (strain K12), this protein is Periplasmic alpha-amylase (malS).